A 132-amino-acid chain; its full sequence is Interleukin-5 (132 aa).

An N-terminal signal peptide occupies residues 1–19 (MRMLLCLNVLTLSCVWAIA). Residues N45, N74, and N88 are each glycosylated (N-linked (GlcNAc...) asparagine).

The protein belongs to the IL-5 family. In terms of assembly, homodimer; disulfide-linked. Interacts with IL5RA. Interacts with CSF2RB.

Its subcellular location is the secreted. In terms of biological role, homodimeric cytokine expressed predominantly by T-lymphocytes and NK cells that plays an important role in the survival, differentiation, and chemotaxis of eosinophils. Acts also on activated and resting B-cells to induce immunoglobulin production, growth, and differentiation. Mechanistically, exerts its biological effects through a receptor composed of IL5RA subunit and the cytokine receptor common subunit beta/CSF2RB. Binding to the receptor leads to activation of various kinases including LYN, SYK and JAK2 and thereby propagates signals through the RAS-MAPK and JAK-STAT5 pathways respectively. The protein is Interleukin-5 (Il5) of Rattus norvegicus (Rat).